We begin with the raw amino-acid sequence, 155 residues long: Protein-export protein SecB (155 aa).

Belongs to the SecB family. As to quaternary structure, homotetramer, a dimer of dimers. One homotetramer interacts with 1 SecA dimer.

The protein localises to the cytoplasm. Functionally, one of the proteins required for the normal export of preproteins out of the cell cytoplasm. It is a molecular chaperone that binds to a subset of precursor proteins, maintaining them in a translocation-competent state. It also specifically binds to its receptor SecA. In Salmonella heidelberg (strain SL476), this protein is Protein-export protein SecB.